Here is a 143-residue protein sequence, read N- to C-terminus: Transcriptional regulator MraZ (143 aa).

2 SpoVT-AbrB domains span residues 5–47 (TFTP…PRNV) and 76–119 (ADEQ…NAES).

This sequence belongs to the MraZ family. In terms of assembly, forms oligomers.

Its subcellular location is the cytoplasm. It is found in the nucleoid. The polypeptide is Transcriptional regulator MraZ (Corynebacterium kroppenstedtii (strain DSM 44385 / JCM 11950 / CIP 105744 / CCUG 35717)).